We begin with the raw amino-acid sequence, 413 residues long: Alpha-1-antitrypsin 1-2 (413 aa).

Residues 1 to 24 (MTPSISWGLLLLAGLCCMVPSFLA) form the signal peptide. Residues Asn-64, Asn-101, and Asn-265 are each glycosylated (N-linked (GlcNAc...) asparagine). Residues 368–387 (AATVFEAVPMSMPPILRFDH) are RCL.

It belongs to the serpin family.

The protein localises to the secreted. Inhibitor of serine proteases. Its primary target is elastase, but it also has a moderate affinity for plasmin and thrombin. The polypeptide is Alpha-1-antitrypsin 1-2 (Serpina1b) (Mus musculus (Mouse)).